Here is a 160-residue protein sequence, read N- to C-terminus: Nucleotide-binding protein CbuK_1936 (160 aa).

Belongs to the YajQ family.

Its function is as follows. Nucleotide-binding protein. This is Nucleotide-binding protein CbuK_1936 from Coxiella burnetii (strain CbuK_Q154) (Coxiella burnetii (strain Q154)).